The following is a 416-amino-acid chain: Xyloglucan O-acetyltransferase 1 (416 aa).

Residues 1–14 (MGLNEQQNVPSQRK) lie on the Cytoplasmic side of the membrane. Residues 15 to 35 (IIVFIVLAFIPIALFRLCFNN) traverse the membrane as a helical; Signal-anchor for type II membrane protein segment. Over 36–416 (PFSSIKDTSL…MIEMLRRWKV (381 aa)) the chain is Lumenal. 4 disulfides stabilise this stretch: C79/C129, C100/C165, C109/C395, and C318/C391. An N-linked (GlcNAc...) asparagine glycan is attached at N96. Positions 152–154 (GDS) match the GDS motif motif. Catalysis depends on S154, which acts as the Nucleophile. Residues N194, N269, and N319 are each glycosylated (N-linked (GlcNAc...) asparagine). D390 acts as the Proton donor in catalysis. The DXXH motif motif lies at 390 to 393 (DCLH). The active-site Proton acceptor is H393.

Belongs to the PC-esterase family. TBL subfamily.

It is found in the golgi apparatus membrane. Its function is as follows. Xyloglucan acetyltransferase that catalyzes the acetylation of fucosylated Gal residues on xyloglucan side chains. Predominantly catalyze 6-O-monoacetylation of Gal residues in the Fuc-Gal-Xyl trisaccharide side chains of xyloglucan oligomers. Involved in xyloglucan specific O-acetylation in roots and rosette leaves. This chain is Xyloglucan O-acetyltransferase 1, found in Arabidopsis thaliana (Mouse-ear cress).